Consider the following 360-residue polypeptide: Molybdenum import ATP-binding protein ModC (360 aa).

The region spanning 5–234 (VKLHLGYQDF…LDLPLALGDD (230 aa)) is the ABC transporter domain. 32–39 (GHSGSGKT) is a binding site for ATP. In terms of domain architecture, Mop spans 295–360 (HSSILNRLPV…AQIKAVAVLA (66 aa)).

It belongs to the ABC transporter superfamily. Molybdate importer (TC 3.A.1.8) family. As to quaternary structure, the complex is composed of two ATP-binding proteins (ModC), two transmembrane proteins (ModB) and a solute-binding protein (ModA).

It localises to the cell inner membrane. The catalysed reaction is molybdate(out) + ATP + H2O = molybdate(in) + ADP + phosphate + H(+). Part of the ABC transporter complex ModABC involved in molybdenum import. Responsible for energy coupling to the transport system. The protein is Molybdenum import ATP-binding protein ModC of Pseudomonas fluorescens (strain ATCC BAA-477 / NRRL B-23932 / Pf-5).